Here is a 916-residue protein sequence, read N- to C-terminus: MGRTGDLENAEFFPMTRRRSTSGTSSRSSTDSGLSVDTAYLEDNKHNNFANGTSGLTDETKYRDVEDAEADVDEPFLPTSSKKLGSGSRTRQIFWALVILCLGGWVLALVLFLTHGRASSQTASETLQQQESDSGSTSAGRPVTLQQVLTGSWNPRAHAISWIAGPDGEDGLLVQRAEVDKEGYMRVDDIRSQEGDDVDSQSGRILIDKAAVRVNGETLMPTFTWPSPDLNKVLLMSNHEKNWRYSFTGRYWIFDVATQTAQPLDPSVPDGRVQLALWSPSSDAVVFVRDNNMYLRKLSSESVVSITKDGGEDLFYGIPDWVYEEEVITDKSVTWWSNDGKYVAFLRTNESAVPEFPVQYFVSRPSGKRPPPGLENYPEVRQIKYPKAGSPNPVVNLLFYDVEKDEVFPVDVPDDFPDDDRIIIEVLWASEGKVIVRATNRESDRVKVFLIDTKSRTGKLVRFEDIANLDGGWVEPSHYTKFIPADPSNGRPDDGYIDTVIHDGYDHLAYFTPLDNPDPIMLTTGEWEVVEAPSAVDLRRGIVYFVATKESPTQRHVYRVHLDGSNLQALTDTSKPGFYDVSFSDGAGYALLSYNGPSVPWQAIINTGGDEITFEKTIEKNPRLASMVETYALPTEIYQNVTIDGFTLQLVERRPPHFNPAKKYPVVFQLYNGPTSQRVDRKFTIDFQSYIASNLGYIVVTLDARGTGYSGRKVRCAVRGNLGHYEAHDQITTAKMWAKKPYVDETRMAIWGWSYGGFMTLKVLEQDAGETFQYGMAVAPVTDWRFYDSVYTERYMHTPEHNPSGYENSTITNVSALSKATRFLLIHGASDDNVHIQNTLTFVDKLDLLNVQNYDMHFYPDSDHNIYFHNAHFMIYERLSNWLINAFNGEWHQIANPVPEDSIWDSVKRSVPAFAH.

2 disordered regions span residues 1 to 35 (MGRT…SGLS) and 67 to 86 (DAEA…KLGS). Topologically, residues 1–92 (MGRTGDLENA…KLGSGSRTRQ (92 aa)) are cytoplasmic. Positions 21-35 (TSGTSSRSSTDSGLS) are enriched in low complexity. Residues 93 to 113 (IFWALVILCLGGWVLALVLFL) traverse the membrane as a helical; Signal-anchor for type II membrane protein segment. Residues 114 to 916 (THGRASSQTA…VKRSVPAFAH (803 aa)) lie on the Vacuolar side of the membrane. N-linked (GlcNAc...) asparagine glycosylation is found at Asn-349 and Asn-640. The Charge relay system role is filled by Ser-754. N-linked (GlcNAc...) asparagine glycosylation is found at Asn-808 and Asn-813. Catalysis depends on charge relay system residues Asp-831 and His-864.

It belongs to the peptidase S9B family.

It localises to the vacuole membrane. It carries out the reaction Release of an N-terminal dipeptide, Xaa-Yaa-|-Zaa-, from a polypeptide, preferentially when Yaa is Pro, provided Zaa is neither Pro nor hydroxyproline.. Its function is as follows. Type IV dipeptidyl-peptidase which removes N-terminal dipeptides sequentially from polypeptides having unsubstituted N-termini provided that the penultimate residue is proline. This Aspergillus flavus (strain ATCC 200026 / FGSC A1120 / IAM 13836 / NRRL 3357 / JCM 12722 / SRRC 167) protein is Probable dipeptidyl-aminopeptidase B (dapB).